The sequence spans 453 residues: Bestrophin homolog 5 (453 aa).

4 helical membrane-spanning segments follow: residues 78–98, 113–133, 275–295, and 314–334; these read ELIV…FALT, DARM…NIII, IPLM…FLCI, and LYIP…LKVA.

The protein belongs to the anion channel-forming bestrophin (TC 1.A.46) family. Calcium-sensitive chloride channel subfamily. As to quaternary structure, forms oligomers.

It localises to the cell membrane. Its function is as follows. Forms chloride channels. This chain is Bestrophin homolog 5 (best-5), found in Caenorhabditis elegans.